Here is a 337-residue protein sequence, read N- to C-terminus: UDP-3-O-acylglucosamine N-acyltransferase (337 aa).

H238 serves as the catalytic Proton acceptor.

It belongs to the transferase hexapeptide repeat family. LpxD subfamily. In terms of assembly, homotrimer.

The enzyme catalyses a UDP-3-O-[(3R)-3-hydroxyacyl]-alpha-D-glucosamine + a (3R)-hydroxyacyl-[ACP] = a UDP-2-N,3-O-bis[(3R)-3-hydroxyacyl]-alpha-D-glucosamine + holo-[ACP] + H(+). Its pathway is bacterial outer membrane biogenesis; LPS lipid A biosynthesis. Functionally, catalyzes the N-acylation of UDP-3-O-acylglucosamine using 3-hydroxyacyl-ACP as the acyl donor. Is involved in the biosynthesis of lipid A, a phosphorylated glycolipid that anchors the lipopolysaccharide to the outer membrane of the cell. This chain is UDP-3-O-acylglucosamine N-acyltransferase, found in Xanthomonas axonopodis pv. citri (strain 306).